Here is a 268-residue protein sequence, read N- to C-terminus: Glucosamine-6-phosphate deaminase (268 aa).

The Proton acceptor; for enolization step role is filled by Asp-67. The For ring-opening step role is filled by Asn-136. His-138 (proton acceptor; for ring-opening step) is an active-site residue. Catalysis depends on Glu-143, which acts as the For ring-opening step.

It belongs to the glucosamine/galactosamine-6-phosphate isomerase family. NagB subfamily. Homohexamer.

The enzyme catalyses alpha-D-glucosamine 6-phosphate + H2O = beta-D-fructose 6-phosphate + NH4(+). It functions in the pathway amino-sugar metabolism; N-acetylneuraminate degradation; D-fructose 6-phosphate from N-acetylneuraminate: step 5/5. In terms of biological role, catalyzes the reversible isomerization-deamination of glucosamine 6-phosphate (GlcN6P) to form fructose 6-phosphate (Fru6P) and ammonium ion. This chain is Glucosamine-6-phosphate deaminase, found in Shewanella loihica (strain ATCC BAA-1088 / PV-4).